The sequence spans 279 residues: Aldo-keto reductase Mvan_2161 (279 aa).

Tyrosine 54 acts as the Proton donor in catalysis. Positions 194, 196, 232, 234, 235, 240, 243, 244, and 270 each coordinate NADPH.

Belongs to the aldo/keto reductase family.

This is Aldo-keto reductase Mvan_2161 from Mycolicibacterium vanbaalenii (strain DSM 7251 / JCM 13017 / BCRC 16820 / KCTC 9966 / NRRL B-24157 / PYR-1) (Mycobacterium vanbaalenii).